The chain runs to 146 residues: Large ribosomal subunit protein uL15 (146 aa).

Residues 1–13 show a composition bias toward basic and acidic residues; it reads MKLHELKPAEGSR. The interval 1 to 60 is disordered; sequence MKLHELKPAEGSRKQRNRVGRGIGSGNGKTAGKGHKGQNARSGGGVRPGFEGGQNPLFRR. Composition is skewed to gly residues over residues 21–31 and 42–52; these read RGIGSGNGKTA and SGGGVRPGFEG.

It belongs to the universal ribosomal protein uL15 family. In terms of assembly, part of the 50S ribosomal subunit.

Binds to the 23S rRNA. The sequence is that of Large ribosomal subunit protein uL15 from Lysinibacillus sphaericus (strain C3-41).